The following is a 382-amino-acid chain: RIB43A-like with coiled-coils protein 2 (382 aa).

Positions 222–255 form a coiled coil; that stretch reads NKSQAIESVERKKQEKKQEQEDNLAEITNLLRGD.

It belongs to the RIB43A family. As to quaternary structure, microtubule inner protein component of sperm flagellar doublet microtubules. As to expression, expressed in airway epithelial cells.

It localises to the cytoplasm. Its subcellular location is the cytoskeleton. It is found in the cilium axoneme. The protein resides in the flagellum axoneme. Microtubule inner protein (MIP) part of the dynein-decorated doublet microtubules (DMTs) in cilia axoneme, which is required for motile cilia beating. The polypeptide is RIB43A-like with coiled-coils protein 2 (Homo sapiens (Human)).